Consider the following 1272-residue polypeptide: AF4/FMR2 family member 2 (1272 aa).

Disordered regions lie at residues 151-190 (SNRK…DPPQ), 204-231 (PQIG…DTFK), 372-401 (TLQK…EDDL), 422-497 (KAKP…QLDK), 557-694 (IREK…ETLQ), 715-743 (TLST…PAMQ), and 772-899 (PGQN…QDKN). Positions 155–164 (SKSEWPRDSH) are enriched in basic and acidic residues. The segment covering 165–179 (NTSPAQASQTSSQPN) has biased composition (low complexity). A compositionally biased stretch (polar residues) spans 180 to 189 (KMQTSTQDPP). The segment covering 210–227 (EKSNPSSKEENNPNSGGE) has biased composition (low complexity). Positions 374-384 (QKWSDPSSRAS) are enriched in polar residues. Residues 387–396 (MLEDDLKLSS) show a composition bias toward basic and acidic residues. Ser395 carries the phosphoserine modification. Positions 436 to 450 (TPQSTPATQTNVGSG) are enriched in polar residues. At Thr482 the chain carries Phosphothreonine. Residues 580 to 590 (STSVDTVSQRT) are compositionally biased toward polar residues. A compositionally biased stretch (basic and acidic residues) spans 620–633 (PKEKGSVELPDPPR). Residues 634-644 (SRNKATAHKPV) show a composition bias toward basic residues. Over residues 715-734 (TLSTLTNGNSNNLSTSNEET) the composition is skewed to low complexity. Residues 815 to 831 (PAETAEKIPEKKQRLED) are compositionally biased toward basic and acidic residues. A compositionally biased stretch (pro residues) spans 841 to 850 (CISPAPPHKP). Residues 887–899 (VSGNNGHFGQDKN) are compositionally biased toward polar residues.

Belongs to the AF4 family. In terms of tissue distribution, highly expressed in the hippocampus, the piriform cortex, Purkinje cells and the cingulate gyrus.

It is found in the nucleus speckle. In terms of biological role, RNA-binding protein. Might be involved in alternative splicing regulation through an interaction with G-quartet RNA structure. This chain is AF4/FMR2 family member 2, found in Mus musculus (Mouse).